Reading from the N-terminus, the 206-residue chain is Large ribosomal subunit protein uL4 (206 aa).

The interval 49-79 (KVKTRSEISRTTKKMYKQKGTGNARHGAASA) is disordered.

The protein belongs to the universal ribosomal protein uL4 family. In terms of assembly, part of the 50S ribosomal subunit.

Functionally, one of the primary rRNA binding proteins, this protein initially binds near the 5'-end of the 23S rRNA. It is important during the early stages of 50S assembly. It makes multiple contacts with different domains of the 23S rRNA in the assembled 50S subunit and ribosome. Forms part of the polypeptide exit tunnel. The chain is Large ribosomal subunit protein uL4 from Methylobacterium sp. (strain 4-46).